The sequence spans 838 residues: AP-4 complex subunit beta (838 aa).

Positions 582 to 673 (NSSKQTTSIN…NQNNNQNNNQ (92 aa)) are hinge. Residues 648–683 (ITDGNQNNNQNNNQNNNQNNNQNNNQNNQNNNNQNN) are disordered. A compositionally biased stretch (low complexity) spans 652 to 683 (NQNNNQNNNQNNNQNNNQNNNQNNQNNNNQNN). The ear stretch occupies residues 674–838 (NNQNNNNQNN…LSIPIPKIFN (165 aa)).

Belongs to the adaptor complexes large subunit family. May be part of the adaptor protein complex 4 (AP-4), a heterotetramer composed of two large adaptins (epsilon-type subunitand beta-type subunit), a medium adaptin (mu-type subunit) and a small adaptin (sigma-type).

Its subcellular location is the golgi apparatus. It is found in the trans-Golgi network membrane. Functionally, probable component of an adaptor protein complex. Adaptor protein complexes are vesicle coat components involved both in vesicle formation and cargo selection. They control the vesicular transport of proteins in different trafficking pathways. This chain is AP-4 complex subunit beta (ap4b1), found in Dictyostelium discoideum (Social amoeba).